Here is a 664-residue protein sequence, read N- to C-terminus: 26S rRNA (cytosine-C(5))-methyltransferase nsun-1 (664 aa).

The disordered stretch occupies residues 1 to 105 (MAIVKKKKVS…DDSDAGDHLP (105 aa)). Basic residues predominate over residues 38 to 52 (PKKKKLVKKVKKSAK). Basic and acidic residues predominate over residues 53 to 68 (KAHEEEPIEQVEKLQL). The segment covering 84-99 (SDDEDLRDDYSDDDSD) has biased composition (acidic residues). S-adenosyl-L-methionine is bound by residues 313–319 (CSAPGGK), aspartate 337, and aspartate 382. Residue cysteine 439 is the Nucleophile of the active site. The tract at residues 513–664 (KMSKQGVMEK…RRKKMLAKQQ (152 aa)) is disordered. Basic and acidic residues predominate over residues 519 to 528 (VMEKEKEKAA). Over residues 541–550 (EASESSDDEE) the composition is skewed to acidic residues. Basic residues predominate over residues 563 to 572 (KPAKKQQQKK). A compositionally biased stretch (basic and acidic residues) spans 606 to 618 (KAAEKQAAVKEDD). Basic residues-rich tracts occupy residues 627–644 (KRAK…KRAA) and 652–664 (VKNR…AKQQ).

The protein belongs to the class I-like SAM-binding methyltransferase superfamily. RsmB/NOP family.

The protein localises to the nucleus. The protein resides in the nucleolus. The catalysed reaction is a cytidine in 26S rRNA + S-adenosyl-L-methionine = a 5-methylcytidine in 26S rRNA + S-adenosyl-L-homocysteine + H(+). Methyltransferase which methylates the carbon-5 position of cytosine 2982 to 5-methylcytosine (m5C2982) in 26S rRNA. May play a role in the translation of leucine and proline codons. May be required for the translation of specific mRNAs such as mRNAs involved in gonad development, collagen production and cuticle integrity. Plays a role in ensuring the correct localization of the germline-specific protein gld-1 during development. Not required for pre-rRNA processing, the production of mature 5S, 5.8S, 18S or 26S rRNAs or global translation. Plays a role in positively regulating fertility. This Caenorhabditis elegans protein is 26S rRNA (cytosine-C(5))-methyltransferase nsun-1.